The sequence spans 214 residues: Orotate phosphoribosyltransferase (214 aa).

Lys26 is a 5-phospho-alpha-D-ribose 1-diphosphate binding site. 34 to 35 serves as a coordination point for orotate; that stretch reads FF. 5-phospho-alpha-D-ribose 1-diphosphate is bound by residues 72–73, Arg99, Lys100, Lys103, His105, and 124–132; these read YK and DDVITAGTA. Residues Thr128 and Arg156 each coordinate orotate.

The protein belongs to the purine/pyrimidine phosphoribosyltransferase family. PyrE subfamily. In terms of assembly, homodimer. It depends on Mg(2+) as a cofactor.

It catalyses the reaction orotidine 5'-phosphate + diphosphate = orotate + 5-phospho-alpha-D-ribose 1-diphosphate. It functions in the pathway pyrimidine metabolism; UMP biosynthesis via de novo pathway; UMP from orotate: step 1/2. Catalyzes the transfer of a ribosyl phosphate group from 5-phosphoribose 1-diphosphate to orotate, leading to the formation of orotidine monophosphate (OMP). This chain is Orotate phosphoribosyltransferase, found in Mannheimia succiniciproducens (strain KCTC 0769BP / MBEL55E).